A 567-amino-acid chain; its full sequence is MIKADLKIINGQIYNTFTRQFTAKEVAIVDGKFFQIADKLSDDFKFEDILDLKGSYVIPGLIDSHMHIESSMATPTNFSETAIRFGTTTVIADAHEIANTSGIKGLKRFMDQPSLIDTFFAIPSSVPSTNPELETTGGIIDLEEVKELLADPRIICLGEAMNFKGITSEPNSLIRKIIALCQKKRPRMPLEGHVPNISKEDLAKFIFAGILSDHTQQTPALIKEKIENGMFIQLQKKSLNKENIETIVKNHFYDYSALVTDDTMADDLINGHLNSIIKLAVKCGLPLEWAIYMTTYTPAQHMHFQDRGVIAPGKIADFVVLNNLDGFSIKNVYKRGVPIDKLSIDDEKPFASEEYHSIYVPNRSAKDFTLRVSKDLKKITANVIEIAAKGTFTKAVKKELLVKDGIVDWQKAGLALLAVQERYGKTGQLTLALVSKSINKSGAIATTWAHDHHNLMVLGTNPDSMAIAYDKVASQQGGYLVVKDKEIVANVQLPIAGIISDEPIDIIGHKLKKVRLAMKDLGYVNTNEIMSLSTLSLLVSPSIKVSDKGIFDVKTQTKIPLLLAGEE.

This sequence belongs to the metallo-dependent hydrolases superfamily. Adenine deaminase family. The cofactor is Mn(2+).

The enzyme catalyses adenine + H2O + H(+) = hypoxanthine + NH4(+). This Oenococcus oeni (strain ATCC BAA-331 / PSU-1) protein is Adenine deaminase 2.